A 643-amino-acid polypeptide reads, in one-letter code: Phosphomethylpyrimidine synthase (643 aa).

Substrate-binding positions include Asn-248, Met-277, Tyr-306, His-342, 362–364, 403–406, and Glu-442; these read SRG and DGLR. Zn(2+) is bound at residue His-446. Tyr-469 is a binding site for substrate. His-510 lines the Zn(2+) pocket. [4Fe-4S] cluster contacts are provided by Cys-590, Cys-593, and Cys-598.

The protein belongs to the ThiC family. In terms of assembly, homodimer. [4Fe-4S] cluster is required as a cofactor.

It catalyses the reaction 5-amino-1-(5-phospho-beta-D-ribosyl)imidazole + S-adenosyl-L-methionine = 4-amino-2-methyl-5-(phosphooxymethyl)pyrimidine + CO + 5'-deoxyadenosine + formate + L-methionine + 3 H(+). It participates in cofactor biosynthesis; thiamine diphosphate biosynthesis. Its function is as follows. Catalyzes the synthesis of the hydroxymethylpyrimidine phosphate (HMP-P) moiety of thiamine from aminoimidazole ribotide (AIR) in a radical S-adenosyl-L-methionine (SAM)-dependent reaction. This chain is Phosphomethylpyrimidine synthase, found in Paraburkholderia phymatum (strain DSM 17167 / CIP 108236 / LMG 21445 / STM815) (Burkholderia phymatum).